Here is a 389-residue protein sequence, read N- to C-terminus: Chalcone synthase 2 (389 aa).

Cysteine 164 is a catalytic residue.

Belongs to the thiolase-like superfamily. Chalcone/stilbene synthases family.

It catalyses the reaction (E)-4-coumaroyl-CoA + 3 malonyl-CoA + 3 H(+) = 2',4,4',6'-tetrahydroxychalcone + 3 CO2 + 4 CoA. The protein operates within secondary metabolite biosynthesis; flavonoid biosynthesis. In terms of biological role, the primary product of this enzyme is 4,2',4',6'-tetrahydroxychalcone (also termed naringenin-chalcone or chalcone) which can under specific conditions spontaneously isomerize into naringenin. This chain is Chalcone synthase 2 (CHS2), found in Trifolium subterraneum (Subterranean clover).